Reading from the N-terminus, the 40-residue chain is uncharacterized protein (40 aa).

This is an uncharacterized protein from Dictyostelium discoideum (Social amoeba).